Consider the following 816-residue polypeptide: Cation/H(+) antiporter 8 (816 aa).

12 consecutive transmembrane segments (helical) span residues 64 to 84 (PKLE…NILF), 97 to 117 (MMLA…NSII), 127 to 147 (IDVA…LKGV), 163 to 183 (VTGV…FNLK), 197 to 214 (VMLL…ARLL), 227 to 247 (VALS…IANV), 255 to 275 (ADGL…FAVV), 297 to 317 (IHGV…LSQF), 343 to 363 (LESF…MLRT), 382 to 402 (FAVA…SVIV), 413 to 433 (SIIL…FYLF), and 447 to 467 (ILVL…GFLY).

Belongs to the monovalent cation:proton antiporter 2 (CPA2) transporter (TC 2.A.37) family. CHX (TC 2.A.37.4) subfamily. Specifically expressed in pollen.

It localises to the membrane. Its function is as follows. May operate as a cation/H(+) antiporter. The protein is Cation/H(+) antiporter 8 (CHX8) of Arabidopsis thaliana (Mouse-ear cress).